Reading from the N-terminus, the 259-residue chain is (3R)-3-hydroxyacyl-CoA dehydrogenase (259 aa).

NAD(+) contacts are provided by residues 13 to 21 and 40 to 41; these read LVTGAGSGI and DL. Serine 58 is subject to Phosphoserine. Residue lysine 66 is modified to N6-acetyllysine. 72–74 contributes to the NAD(+) binding site; it reads ADV. Serine 154 is a substrate binding site. Residue lysine 158 is modified to N6-succinyllysine. Catalysis depends on tyrosine 167, which acts as the Proton acceptor. NAD(+)-binding positions include 167 to 171 and 200 to 202; these read YASSK and IAT. Residue lysine 171 is modified to N6-succinyllysine.

It belongs to the short-chain dehydrogenases/reductases (SDR) family. As to quaternary structure, heterotetramer with CBR4; contains two molecules of HSD17B8 and CBR4. In terms of tissue distribution, expressed in ovary at protein level.

The protein resides in the mitochondrion matrix. The catalysed reaction is a (3R)-3-hydroxyacyl-CoA + NAD(+) = a 3-oxoacyl-CoA + NADH + H(+). It catalyses the reaction 17beta-estradiol + NAD(+) = estrone + NADH + H(+). It carries out the reaction testosterone + NAD(+) = androst-4-ene-3,17-dione + NADH + H(+). The enzyme catalyses 17beta-hydroxy-5alpha-androstan-3-one + NAD(+) = 5alpha-androstan-3,17-dione + NADH + H(+). Its pathway is steroid biosynthesis; estrogen biosynthesis. It functions in the pathway lipid metabolism; fatty acid biosynthesis. It participates in lipid metabolism; mitochondrial fatty acid beta-oxidation. Its function is as follows. Required for the solubility and assembly of the heterotetramer 3-ketoacyl-[acyl carrier protein] (ACP) reductase functional complex (KAR or KAR1) that forms part of the mitochondrial fatty acid synthase (mtFAS). Alpha-subunit of the KAR complex that acts as scaffold protein required for the stability of carbonyl reductase type-4 (CBR4, beta-subunit of the KAR complex) and for its 3-ketoacyl-ACP reductase activity, thereby participating in mitochondrial fatty acid biosynthesis. Catalyzes the NAD-dependent conversion of (3R)-3-hydroxyacyl-CoA into 3-ketoacyl-CoA (3-oxoacyl-CoA) with no chain length preference; this enzymatic activity is not needed for the KAR function. Prefers (3R)-3-hydroxyacyl-CoA over (3S)-3-hydroxyacyl-CoA and displays enzymatic activity only in the presence of NAD(+). Cooperates with enoyl-CoA hydratase 1 in mitochondria, together they constitute an alternative route to the auxiliary enzyme pathways for the breakdown of Z-PUFA (cis polyunsaturated fatty acid) enoyl-esters. NAD-dependent 17-beta-hydroxysteroid dehydrogenase with highest activity towards estradiol (17beta-estradiol or E2). Has very low activity towards testosterone and dihydrotestosterone (17beta-hydroxy-5alpha-androstan-3-one). Primarily an oxidative enzyme, it can switch to a reductive mode determined in the appropriate physiologic milieu and catalyze the reduction of estrone (E1) to form biologically active 17beta-estradiol. The protein is (3R)-3-hydroxyacyl-CoA dehydrogenase (Hsd17b8) of Rattus norvegicus (Rat).